Consider the following 139-residue polypeptide: D-ribose pyranase (139 aa).

His-20 functions as the Proton donor in the catalytic mechanism. Residues Asp-28, His-106, and 128–130 (YAN) contribute to the substrate site.

This sequence belongs to the RbsD / FucU family. RbsD subfamily. As to quaternary structure, homodecamer.

The protein localises to the cytoplasm. It carries out the reaction beta-D-ribopyranose = beta-D-ribofuranose. The protein operates within carbohydrate metabolism; D-ribose degradation; D-ribose 5-phosphate from beta-D-ribopyranose: step 1/2. Functionally, catalyzes the interconversion of beta-pyran and beta-furan forms of D-ribose. This Proteus mirabilis (strain HI4320) protein is D-ribose pyranase.